A 186-amino-acid chain; its full sequence is NADH-ubiquinone oxidoreductase 17.8 kDa subunit, mitochondrial (186 aa).

The N-terminal 26 residues, 1 to 26 (MSSFRLGVSRVARQVRAPCVRNTRRY), are a transit peptide targeting the mitochondrion. Residues 22–49 (NTRRYASDSHAPADHTHSAAGHGEHHHA) form a disordered region. Over residues 26-49 (YASDSHAPADHTHSAAGHGEHHHA) the composition is skewed to basic and acidic residues. The chain crosses the membrane as a helical span at residues 58–78 (LGTAFYVIFGAIPAFGALYYF).

Complex I is composed of about 40 different subunits.

Its subcellular location is the mitochondrion inner membrane. It catalyses the reaction a ubiquinone + NADH + 5 H(+)(in) = a ubiquinol + NAD(+) + 4 H(+)(out). Transfer of electrons from NADH to the respiratory chain. The immediate electron acceptor for the enzyme is believed to be ubiquinone. The chain is NADH-ubiquinone oxidoreductase 17.8 kDa subunit, mitochondrial (nuo17.8) from Neurospora crassa (strain ATCC 24698 / 74-OR23-1A / CBS 708.71 / DSM 1257 / FGSC 987).